A 550-amino-acid chain; its full sequence is Chaperonin GroEL (550 aa).

Residues 29–32 (TLGP), lysine 50, 86–90 (DGTTT), glycine 414, and aspartate 495 contribute to the ATP site.

Belongs to the chaperonin (HSP60) family. Forms a cylinder of 14 subunits composed of two heptameric rings stacked back-to-back. Interacts with the co-chaperonin GroES.

Its subcellular location is the cytoplasm. The enzyme catalyses ATP + H2O + a folded polypeptide = ADP + phosphate + an unfolded polypeptide.. Its function is as follows. Together with its co-chaperonin GroES, plays an essential role in assisting protein folding. The GroEL-GroES system forms a nano-cage that allows encapsulation of the non-native substrate proteins and provides a physical environment optimized to promote and accelerate protein folding. The protein is Chaperonin GroEL of Parvibaculum lavamentivorans (strain DS-1 / DSM 13023 / NCIMB 13966).